The following is a 416-amino-acid chain: Histidine--tRNA ligase (416 aa).

Belongs to the class-II aminoacyl-tRNA synthetase family. As to quaternary structure, homodimer.

It localises to the cytoplasm. It catalyses the reaction tRNA(His) + L-histidine + ATP = L-histidyl-tRNA(His) + AMP + diphosphate + H(+). This chain is Histidine--tRNA ligase, found in Clostridium novyi (strain NT).